The chain runs to 247 residues: Ubiquinone biosynthesis O-methyltransferase (247 aa).

Positions 45, 65, 86, and 130 each coordinate S-adenosyl-L-methionine.

This sequence belongs to the methyltransferase superfamily. UbiG/COQ3 family.

The enzyme catalyses a 3-demethylubiquinol + S-adenosyl-L-methionine = a ubiquinol + S-adenosyl-L-homocysteine + H(+). The catalysed reaction is a 3-(all-trans-polyprenyl)benzene-1,2-diol + S-adenosyl-L-methionine = a 2-methoxy-6-(all-trans-polyprenyl)phenol + S-adenosyl-L-homocysteine + H(+). Its pathway is cofactor biosynthesis; ubiquinone biosynthesis. Functionally, O-methyltransferase that catalyzes the 2 O-methylation steps in the ubiquinone biosynthetic pathway. This is Ubiquinone biosynthesis O-methyltransferase from Alkalilimnicola ehrlichii (strain ATCC BAA-1101 / DSM 17681 / MLHE-1).